The chain runs to 385 residues: MKLVFSALASLLSGASATIYYAGVAESSGEFGVWSATQTPGTGLPGRFGVDYAFISEAAVDVHVDQNHLNLFRVAFLLERMCPPATGLGAAFNETHFDYFKEAVDYITVTKGAYAILDPHNYMRYNDPSYQPFSGSVIGNTSDSTAATTEQFGEFWGELASRFNDNERVIFGLMNEPHDMATSLVLANNQAAIDAIRAANASNLIIMPGNSWTGGHSWTEGSDPSSALLNQFKDPLNNTAIDIHEYLDYDFSGGHLECVSDPETNLAALTAWLKENNLKAFITEFGGSNSTSCQEMLPDLINYMADNAEYIGWTAWAAGPFWGPNSPCCTNSTQLGSLEPGSTAVDGSPGLYDTVWLPVIQPLVPTELQWSGPASISGGELTSRA.

Positions 1-17 (MKLVFSALASLLSGASA) are cleaved as a signal peptide. Asn-93 and Asn-140 each carry an N-linked (GlcNAc...) asparagine glycan. Glu-176 acts as the Proton donor in catalysis. 2 N-linked (GlcNAc...) asparagine glycosylation sites follow: Asn-200 and Asn-237. The Nucleophile role is filled by Glu-284. N-linked (GlcNAc...) asparagine glycans are attached at residues Asn-289 and Asn-331.

The protein belongs to the glycosyl hydrolase 5 (cellulase A) family.

It catalyses the reaction Endohydrolysis of (1-&gt;4)-beta-D-glucosidic linkages in cellulose, lichenin and cereal beta-D-glucans.. It functions in the pathway glycan metabolism; cellulose degradation. In terms of biological role, active towards carboxymethyl cellulose. The protein is Endoglucanase 1 (eg 1) of Robillarda sp. (strain Y-20).